A 274-amino-acid chain; its full sequence is MKQYHDLLKHVLEQGAQKGDRTGTGTKSVFGYQMRFDLSEGFPMVTTKKLHLKSIIYELLWFLKGDTNIEYLKENGVRIWNEWADDNGDLGPVYGHQWRNWNGEEIDQIKEIVHSLKHNPNSRRMLVSAWNPSVLPDTSVSFSENVANGKAALPPCHAFFQFYVADGKLSCQLYQRSADIFLGVPFNIASYALLTMMMAQVCGYEAGDFIHTFGDAHIYSNHMEQVELQLSREPRQLPIMKINPEVKDIFDFKFEDFTLEDYDPHPGIKAKVAI.

Arg-21 serves as a coordination point for dUMP. His-51 is a (6R)-5,10-methylene-5,6,7,8-tetrahydrofolate binding site. 123 to 124 (RR) is a binding site for dUMP. The active-site Nucleophile is Cys-156. DUMP contacts are provided by residues 176–179 (RSAD), Asn-187, and 217–219 (HIY). Asp-179 provides a ligand contact to (6R)-5,10-methylene-5,6,7,8-tetrahydrofolate. Residue Ala-273 participates in (6R)-5,10-methylene-5,6,7,8-tetrahydrofolate binding.

Belongs to the thymidylate synthase family. Bacterial-type ThyA subfamily. As to quaternary structure, homodimer.

Its subcellular location is the cytoplasm. It catalyses the reaction dUMP + (6R)-5,10-methylene-5,6,7,8-tetrahydrofolate = 7,8-dihydrofolate + dTMP. It functions in the pathway pyrimidine metabolism; dTTP biosynthesis. Its function is as follows. Catalyzes the reductive methylation of 2'-deoxyuridine-5'-monophosphate (dUMP) to 2'-deoxythymidine-5'-monophosphate (dTMP) while utilizing 5,10-methylenetetrahydrofolate (mTHF) as the methyl donor and reductant in the reaction, yielding dihydrofolate (DHF) as a by-product. This enzymatic reaction provides an intracellular de novo source of dTMP, an essential precursor for DNA biosynthesis. In Christiangramia forsetii (strain DSM 17595 / CGMCC 1.15422 / KT0803) (Gramella forsetii), this protein is Thymidylate synthase.